The following is a 1284-amino-acid chain: MVLYKNKKKQIINYANSNWGQNEGVEFQETMLQCILEAVIVSKDAKQVLSLLHELKLFENFLWQRVNTEMSLNHINLTCMLLLYKSKYEYITWDLIDENRFQLFFEKVIEVSLSLNLSEVVYMIQFITLCFQFSNIEKLRKLVYQLTNISILNSLDNLDKVKYLLHDSSSLTKAFDSYKEKRPSIVEKFPLHNLLSRWIHSLLIKSISYAQTEKQEAKVTPLLAIINMSLVLLSAFPTRRFAHPVIEDSCFYTALRMSLYYDSNELFKKMTDDLNYVLKFPFDNTRGNEYEKEQKIRNDELVYYHLQLTLFSDFQKELGDLVFCTQTSLQQRQKLEEITSFLSFNSLKSLCSKCYLRTSFPEKYAIKVDFEFLKNVFINTYDRTRLVNDYDEIINFTLKDVLGERSVMDQENSLTNYFLLQNTAIQYLSISFFMRQQSKAYKKLLLRSLYAELLNFSEQYRRLSIKNATKNLTKDNFFSLNNFKVTSVAPPQIGQVLPQFVKCQMGLSRPGPFHSALRDLKNSIKSPFLCLIYISKDMEYKLLHGNALDPLEGVTDFTIATICNDDVGMFQSDMQSDSDNKSINVYLSPFYYHSLAGLGEYRPKQLKFNFALVLSPEANKYWLDLNILVSLLNRAKEFPKWFEDLFLGFGTPDICAFPNAGLNSIYARNLFNTVEQLQSVLPNCHVPSNLSTESLLIKFYTNQNKISADVTASDRHFLLPSNRLYTYNDKQLESILRGSQPGLTMVNGPTRCGKHVLVCKLLEVLQDTSPNDRTVVLSDSNFSMNTLFTLLEKARCFHQGHLLYLSDEGKDETLERYGTLSSWISKLPGLLREIGRLAASIQAPGSHDASPDTALYFRDAYIKRLWEKYLNTVDDKDSVDAYNRFPFHSYFGDKSKRPIETYNKDNFFDYATKLYGELEYMFQQLEEIRPFGLLRYYEDQELYALCQQSRIIGCTWTSLSTRLGTLKEKGFCFNNLIVMNSQNISESSITSILLSNCEPTGFDRLVLLGNQYLTSGNQDINNTSNGSLFKRLRYLKSRIIDLNTQYNVRESISSLCSSIYPLDIKTVDSSPNKRLDYGNSGFAHEVQFINVGAFKGSQETEPVSGYKQNLGEAEYAVALFQYMRMLGYPTNEIVICTLYESQVSLLNEIISVRCSHNSFFGQPAFVGTVEKLPSDKRVNFVIFTTVESKEASDHWNPKTFYKAFSACSYGLYVLCNRDLFRSTRGLEKLWNEIEKTPDKLLLTTGEIYPSSHKIGSSVETFEIENLLHLSNYVVEMTKKRLNTN.

Belongs to the CWF11 family. In terms of assembly, belongs to the 40S cdc5-associated complex (or cwf complex), a spliceosome sub-complex reminiscent of a late-stage spliceosome composed of the U2, U5 and U6 snRNAs and at least brr2, cdc5, cwf2/prp3, cwf3/syf1, cwf4/syf3, cwf5/ecm2, spp42/cwf6, cwf7/spf27, cwf8, cwf9, cwf10, cwf11, cwf12, prp45/cwf13, cwf14, cwf15, cwf16, cwf17, cwf18, cwf19, cwf20, cwf21, cwf22, cwf23, cwf24, cwf25, cwf26, cyp7/cwf27, cwf28, cwf29/ist3, lea1, msl1, prp5/cwf1, prp10, prp12/sap130, prp17, prp22, sap61, sap62, sap114, sap145, slu7, smb1, smd1, smd3, smf1, smg1 and syf2.

It localises to the nucleus. In terms of biological role, involved in mRNA splicing where it associates with cdc5 and the other cwf proteins as part of the spliceosome. The sequence is that of Pre-mRNA-splicing factor cwf11 (cwf11) from Schizosaccharomyces pombe (strain 972 / ATCC 24843) (Fission yeast).